The primary structure comprises 528 residues: Folylpolyglutamate synthase (528 aa).

104–107 (GKGG) serves as a coordination point for ATP. Mg(2+) is bound by residues serine 134, glutamate 208, and histidine 236. ATP is bound by residues arginine 351 and aspartate 365.

It belongs to the folylpolyglutamate synthase family. It depends on a monovalent cation as a cofactor.

Its subcellular location is the mitochondrion inner membrane. It localises to the mitochondrion matrix. It is found in the cytoplasm. It carries out the reaction (6S)-5,6,7,8-tetrahydrofolyl-(gamma-L-Glu)(n) + L-glutamate + ATP = (6S)-5,6,7,8-tetrahydrofolyl-(gamma-L-Glu)(n+1) + ADP + phosphate + H(+). Its pathway is cofactor biosynthesis; tetrahydrofolylpolyglutamate biosynthesis. Catalyzes conversion of folates to polyglutamate derivatives allowing concentration of folate compounds in the cell and the intracellular retention of these cofactors, which are important substrates for most of the folate-dependent enzymes that are involved in one-carbon transfer reactions involved in purine, pyrimidine and amino acid synthesis. This Neurospora crassa (strain ATCC 24698 / 74-OR23-1A / CBS 708.71 / DSM 1257 / FGSC 987) protein is Folylpolyglutamate synthase (met-6).